The chain runs to 908 residues: DNA mismatch repair protein MutS (908 aa).

Residue 662-669 (GPNMGGKS) coordinates ATP.

Belongs to the DNA mismatch repair MutS family.

This protein is involved in the repair of mismatches in DNA. It is possible that it carries out the mismatch recognition step. This protein has a weak ATPase activity. This is DNA mismatch repair protein MutS from Rhizobium johnstonii (strain DSM 114642 / LMG 32736 / 3841) (Rhizobium leguminosarum bv. viciae).